The chain runs to 206 residues: 2-phospho-L-lactate guanylyltransferase (206 aa).

This sequence belongs to the CofC family. In terms of assembly, homodimer.

It carries out the reaction (2S)-2-phospholactate + GTP + H(+) = (2S)-lactyl-2-diphospho-5'-guanosine + diphosphate. It functions in the pathway cofactor biosynthesis; coenzyme F420 biosynthesis. Guanylyltransferase that catalyzes the activation of (2S)-2-phospholactate (2-PL) as (2S)-lactyl-2-diphospho-5'-guanosine, via the condensation of 2-PL with GTP. It is involved in the biosynthesis of coenzyme F420, a hydride carrier cofactor. This Haloferax volcanii (strain ATCC 29605 / DSM 3757 / JCM 8879 / NBRC 14742 / NCIMB 2012 / VKM B-1768 / DS2) (Halobacterium volcanii) protein is 2-phospho-L-lactate guanylyltransferase.